A 436-amino-acid polypeptide reads, in one-letter code: MFESKINPLWQSFILAVQEEVKPALGCTEPISLALAAAAAAAELDGTVERIDAWVSPNLMKNGMGVTVPGTGMVGLPIAAALGALGGDAKAGLEVLKDASAKAVADAKAMLASGHVAVMLQEPCNDILFSRAKVYSGDSWACVTIVGDHTNIVRIETNKGVVFTQADNAQEEEKNSPLGVLSHTSLEEILAFVNAVPFDAIRFILDAARLNGALSQEGLRGSWGLHIGSTLAKQCDRGLLAKDLSTAILIRTSAASDARMGGATLPAMSNSGSGNQGITATVPVMVVAEHVGADDERLARALMLSHLSAIYIHHQLPRLSALCAATTAAMGAAAGMAWLIDGRYDTIAMAISSMIGDVSGMICDGASNSCAMKVSTSASAAWKAVLMALDDTAVTGNEGIVAHNVEQSIANLCSLACRSMQQTDKQIIEIMASKAH.

It belongs to the UPF0597 family.

This is UPF0597 protein YhaM from Salmonella gallinarum (strain 287/91 / NCTC 13346).